A 132-amino-acid chain; its full sequence is Small ribosomal subunit protein uS8 (132 aa).

The protein belongs to the universal ribosomal protein uS8 family. Part of the 30S ribosomal subunit. Contacts proteins S5 and S12.

Its function is as follows. One of the primary rRNA binding proteins, it binds directly to 16S rRNA central domain where it helps coordinate assembly of the platform of the 30S subunit. The polypeptide is Small ribosomal subunit protein uS8 (Bartonella tribocorum (strain CIP 105476 / IBS 506)).